An 865-amino-acid polypeptide reads, in one-letter code: Chitin synthase 3 (865 aa).

Positions 1-59 are disordered; it reads MASQYPGHQLDDIPSTNVYRPPPRHEDDEAEHALLHQNSAYQSQYDDPHSRPLTPGQES. Residues 23–34 show a composition bias toward basic and acidic residues; the sequence is PRHEDDEAEHAL. Positions 36–45 are enriched in polar residues; that stretch reads HQNSAYQSQY. N-linked (GlcNAc...) asparagine glycosylation is found at asparagine 64, asparagine 95, and asparagine 538. 3 consecutive transmembrane segments (helical) span residues 565-585, 620-640, and 650-670; these read FFLHIQMIYNIVSVLLSWFSL, IINTILQYLYLAFLLLQFILA, and VAYIISFCLFGLIQLYVIVLS. An N-linked (GlcNAc...) asparagine glycan is attached at asparagine 682. The next 3 membrane-spanning stretches (helical) occupy residues 707-727, 735-755, and 837-857; these read IVIIALAATFGLYFVASFLYM, SFAQYLLLMPSFINILMIYAF, and LVATWIFSNALLAVAITSDSL.

The protein belongs to the chitin synthase family. Class III subfamily.

It localises to the cell membrane. It catalyses the reaction [(1-&gt;4)-N-acetyl-beta-D-glucosaminyl](n) + UDP-N-acetyl-alpha-D-glucosamine = [(1-&gt;4)-N-acetyl-beta-D-glucosaminyl](n+1) + UDP + H(+). In terms of biological role, polymerizes chitin, a structural polymer of the cell wall and septum, by transferring the sugar moiety of UDP-GlcNAc to the non-reducing end of the growing chitin polymer. Is not only stable at different pH, but is also able to tolerate a broad temperature range. With CHS2, plays an important role in virulence. The sequence is that of Chitin synthase 3 from Exophiala dermatitidis (strain ATCC 34100 / CBS 525.76 / NIH/UT8656) (Black yeast).